Reading from the N-terminus, the 322-residue chain is Ferrochelatase (322 aa).

2 residues coordinate Fe cation: H193 and E274.

It belongs to the ferrochelatase family.

The protein localises to the cytoplasm. The catalysed reaction is heme b + 2 H(+) = protoporphyrin IX + Fe(2+). It functions in the pathway porphyrin-containing compound metabolism; protoheme biosynthesis; protoheme from protoporphyrin-IX: step 1/1. In terms of biological role, catalyzes the ferrous insertion into protoporphyrin IX. The chain is Ferrochelatase from Aliivibrio fischeri (strain MJ11) (Vibrio fischeri).